The chain runs to 388 residues: Palmitoyltransferase ZDHHC18 (388 aa).

The interval 1-67 is disordered; the sequence is MKDCEYQQIS…GSGSLGRRPR (67 aa). The Cytoplasmic portion of the chain corresponds to 1 to 90; sequence MKDCEYQQIS…CGGRLMLAGH (90 aa). The span at 10-27 shows a compositional bias: low complexity; that stretch reads SPGAAPLPASPGARRPGP. Ser-19 carries the phosphoserine modification. The span at 28–46 shows a compositional bias: pro residues; sequence AASPTPGPGPAPPAAPAPP. The chain crosses the membrane as a helical span at residues 91–111; that stretch reads GGVFALTLLLILTTTGLFFVF. Residues 112 to 119 lie on the Lumenal side of the membrane; that stretch reads DCPYLARK. Residues 120–140 form a helical membrane-spanning segment; sequence LTLAIPIIAAILFFFVMSCLL. Residues 141–235 are Cytoplasmic-facing; the sequence is QTSFTDPGIL…GNCVGRRNYR (95 aa). Positions 192–242 constitute a DHHC domain; the sequence is KYCFTCKMFRPPRTSHCSVCDNCVERFDHHCPWVGNCVGRRNYRFFYAFIL. The active-site S-palmitoyl cysteine intermediate is Cys-222. Residues 236 to 256 form a helical membrane-spanning segment; sequence FFYAFILSLSFLTAFIFACVV. Residues 257–277 lie on the Lumenal side of the membrane; the sequence is THLTLRAQGSNFLSTLKETPA. A helical membrane pass occupies residues 278 to 298; the sequence is SVLELVICFFSIWSILGLSGF. The Cytoplasmic portion of the chain corresponds to 299–388; sequence HTYLVASNLT…PDASMVGGHP (90 aa). The segment at 364-388 is disordered; the sequence is LPSPIRSDEPACRAKPDASMVGGHP. The segment covering 369–379 has biased composition (basic and acidic residues); that stretch reads RSDEPACRAKP.

It belongs to the DHHC palmitoyltransferase family. ERF2/ZDHHC9 subfamily. As to expression, widely expressed.

Its subcellular location is the golgi apparatus membrane. It carries out the reaction L-cysteinyl-[protein] + hexadecanoyl-CoA = S-hexadecanoyl-L-cysteinyl-[protein] + CoA. Palmitoyltransferase that catalyzes the addition of palmitate onto various protein substrates, such as CGAS, HRAS and LCK. Acts as a negative regulator of the cGAS-STING pathway be mediating palmitoylation and inactivation of CGAS. May also have a palmitoyltransferase activity toward the beta-2 adrenergic receptor/ADRB2 and therefore regulate G protein-coupled receptor signaling. This Homo sapiens (Human) protein is Palmitoyltransferase ZDHHC18.